We begin with the raw amino-acid sequence, 184 residues long: NADH-quinone oxidoreductase subunit B (184 aa).

[4Fe-4S] cluster contacts are provided by Cys37, Cys38, Cys103, and Cys132.

This sequence belongs to the complex I 20 kDa subunit family. NDH-1 is composed of 14 different subunits. Subunits NuoB, C, D, E, F, and G constitute the peripheral sector of the complex. [4Fe-4S] cluster serves as cofactor.

The protein resides in the cell membrane. The enzyme catalyses a quinone + NADH + 5 H(+)(in) = a quinol + NAD(+) + 4 H(+)(out). Functionally, NDH-1 shuttles electrons from NADH, via FMN and iron-sulfur (Fe-S) centers, to quinones in the respiratory chain. The immediate electron acceptor for the enzyme in this species is believed to be a menaquinone. Couples the redox reaction to proton translocation (for every two electrons transferred, four hydrogen ions are translocated across the cytoplasmic membrane), and thus conserves the redox energy in a proton gradient. This Nocardioides sp. (strain ATCC BAA-499 / JS614) protein is NADH-quinone oxidoreductase subunit B.